Reading from the N-terminus, the 125-residue chain is UPF0102 protein Mpop_0474 (125 aa).

The protein belongs to the UPF0102 family.

The sequence is that of UPF0102 protein Mpop_0474 from Methylorubrum populi (strain ATCC BAA-705 / NCIMB 13946 / BJ001) (Methylobacterium populi).